The following is a 264-amino-acid chain: Phosphonates import ATP-binding protein PhnC (264 aa).

The ABC transporter domain maps to 7–254 (LSIRAASKTF…KLIDIYGPEF (248 aa)). 39–46 (GPSGSGKS) contacts ATP.

The protein belongs to the ABC transporter superfamily. Phosphonates importer (TC 3.A.1.9.1) family. In terms of assembly, the complex is composed of two ATP-binding proteins (PhnC), two transmembrane proteins (PhnE) and a solute-binding protein (PhnD).

Its subcellular location is the cell inner membrane. It carries out the reaction phosphonate(out) + ATP + H2O = phosphonate(in) + ADP + phosphate + H(+). Functionally, part of the ABC transporter complex PhnCDE involved in phosphonates import. Responsible for energy coupling to the transport system. The sequence is that of Phosphonates import ATP-binding protein PhnC from Caulobacter vibrioides (strain ATCC 19089 / CIP 103742 / CB 15) (Caulobacter crescentus).